The sequence spans 325 residues: Protein ORANGE-GREEN, chloroplastic (325 aa).

The transit peptide at 1–54 (MDRVLVASYPINHLIRPHSFRIDYCWSTCFTSRLNSGKERQKLSSRWRWRSMAS) directs the protein to the chloroplast. Residues 53–71 (ASDSTDSSSSSSFAPSVES) are compositionally biased toward low complexity. Positions 53–77 (ASDSTDSSSSSSFAPSVESDPSDKT) are disordered. Transmembrane regions (helical) follow at residues 164–184 (LYYVTCYSLIAGIILFGGLLA) and 217–237 (IVASFSGGAVGVISALMVVEV). Residues 226–317 (VGVISALMVV…CTGMAMASEH (92 aa)) form a CR-type-like region. Residues 248–255 (CKYCLGTG) form a CXXCXGXG motif repeat. The stretch at 259–266 (CARCSNTG) is one CXXCXXXG motif repeat. The stretch at 292–299 (CQNCSGSG) is one CXXCXGXG motif repeat. One copy of the CXXCXXXG motif repeat lies at 303–310 (CPTCLCTG).

It belongs to the orange-like family.

It is found in the plastid. The protein localises to the chloroplast membrane. In terms of biological role, involved in chloroplast differentiation in fruit flesh. The chain is Protein ORANGE-GREEN, chloroplastic from Cucumis melo (Muskmelon).